The following is a 564-amino-acid chain: MALSGQDWRRHQSHRQHRNHRTQGNHQKLISTATLTLFVLFLSSWIAYAAGKATVPAPLVEGETESATSQDFNSSSAFLGAIASASSTGSGSGSGSGSGSGSGSGSYGLASMNSSPIAIVSYQGITSSNLGDSNTTLVPLSDTPLLLEEFAAGEFVLPPLTSIFVSIVLLIVILGTVVGNVLVCIAVCMVRKLRRPCNYLLVSLALSDLCVALLVMPMALLYEVLEKWNFGPLLCDIWVSFDVLCCTASILNLCAISVDRYLAITKPLEYGVKRTPRRMMLCVGIVWLAAACISLPPLLILGNEHEDEEGQPICTVCQNFAYQIYATLGSFYIPLSVMLFVYYQIFRAARRIVLEEKRAQTHLQQALNGTGSPSAPQAPPLGHTELASSGNGQRHSSVGNTSLTYSTCGGLSSGGGALAGHGSGGGVSGSTGLLGSPHHKKLRFQLAKEKKASTTLGIIMSAFTVCWLPFFILALIRPFETMHVPASLSSLFLWLGYANSLLNPIIYATLNRDFRKPFQEILYFRCSSLNTMMRENYYQDQYGEPPSQRVMLGDERHGARESFL.

Residues 1–26 (MALSGQDWRRHQSHRQHRNHRTQGNH) are disordered. The segment covering 11-23 (HQSHRQHRNHRTQ) has biased composition (basic residues). A helical membrane pass occupies residues 29 to 51 (LISTATLTLFVLFLSSWIAYAAG). 9 consecutive repeat copies span residues 89 to 90 (GS), 91 to 92 (GS), 93 to 94 (GS), 95 to 96 (GS), 97 to 98 (GS), 99 to 100 (GS), 101 to 102 (GS), 103 to 104 (GS), and 105 to 106 (GS). The tract at residues 89–106 (GSGSGSGSGSGSGSGSGS) is 9 X 2 AA tandem repeats of G-S. Residues 165–188 (VSIVLLIVILGTVVGNVLVCIAVC) form a helical membrane-spanning segment. Topologically, residues 189–198 (MVRKLRRPCN) are cytoplasmic. A helical transmembrane segment spans residues 199–222 (YLLVSLALSDLCVALLVMPMALLY). Residues 223-236 (EVLEKWNFGPLLCD) are Extracellular-facing. The cysteines at positions 235 and 314 are disulfide-linked. A helical transmembrane segment spans residues 237–258 (IWVSFDVLCCTASILNLCAISV). Positions 238–247 (WVSFDVLCCT) are agonist binding. Ergotamine contacts are provided by D242 and T247. A DRY motif; important for ligand-induced conformation changes motif is present at residues 259-261 (DRY). Over 259 to 278 (DRYLAITKPLEYGVKRTPRR) the chain is Cytoplasmic. Residues 279–302 (MMLCVGIVWLAAACISLPPLLILG) form a helical membrane-spanning segment. Residues 303-330 (NEHEDEEGQPICTVCQNFAYQIYATLGS) are Extracellular-facing. The chain crosses the membrane as a helical span at residues 331–353 (FYIPLSVMLFVYYQIFRAARRIV). Topologically, residues 354 to 454 (LEEKRAQTHL…QLAKEKKAST (101 aa)) are cytoplasmic. The tract at residues 367–396 (LNGTGSPSAPQAPPLGHTELASSGNGQRHS) is disordered. The segment covering 386–396 (LASSGNGQRHS) has biased composition (polar residues). The chain crosses the membrane as a helical span at residues 455 to 476 (TLGIIMSAFTVCWLPFFILALI). The Extracellular segment spans residues 477–487 (RPFETMHVPAS). A helical membrane pass occupies residues 488–510 (LSSLFLWLGYANSLLNPIIYATL). Positions 503 to 507 (NPIIY) match the NPxxY motif; important for ligand-induced conformation changes and signaling motif. Topologically, residues 511-564 (NRDFRKPFQEILYFRCSSLNTMMRENYYQDQYGEPPSQRVMLGDERHGARESFL) are cytoplasmic.

Belongs to the G-protein coupled receptor 1 family. 5-hydroxytryptamine receptor subfamily. As to expression, expressed predominantly in adult heads.

It is found in the cell membrane. G-protein coupled receptor for 5-hydroxytryptamine (serotonin). Also functions as a receptor for various alkaloids. Ligand binding causes a conformation change that triggers signaling via guanine nucleotide-binding proteins (G proteins) and modulates the activity of down-stream effectors, such as adenylate cyclase. Signaling activates adenylate cyclase activity. This Drosophila melanogaster (Fruit fly) protein is 5-hydroxytryptamine receptor 1 (5-HT7).